Reading from the N-terminus, the 418-residue chain is Tyrosine--tRNA ligase (418 aa).

Y34 lines the L-tyrosine pocket. Residues 39-48 carry the 'HIGH' region motif; it reads PTADSLHLGH. L-tyrosine contacts are provided by Y169 and Q173. Residues 229-233 carry the 'KMSKS' region motif; sequence KFGKS. K232 lines the ATP pocket. Residues 352 to 418 enclose the S4 RNA-binding domain; the sequence is LNLVDMLVTA…GKKKYAVLTY (67 aa).

It belongs to the class-I aminoacyl-tRNA synthetase family. TyrS type 1 subfamily. As to quaternary structure, homodimer.

It localises to the cytoplasm. The enzyme catalyses tRNA(Tyr) + L-tyrosine + ATP = L-tyrosyl-tRNA(Tyr) + AMP + diphosphate + H(+). Its function is as follows. Catalyzes the attachment of tyrosine to tRNA(Tyr) in a two-step reaction: tyrosine is first activated by ATP to form Tyr-AMP and then transferred to the acceptor end of tRNA(Tyr). In Streptococcus pyogenes serotype M3 (strain SSI-1), this protein is Tyrosine--tRNA ligase.